The chain runs to 285 residues: (3S)-malyl-CoA thioesterase (285 aa).

Residues arginine 70 and glutamate 122 each contribute to the substrate site. Mg(2+)-binding residues include glutamate 122 and aspartate 148.

It belongs to the HpcH/HpaI aldolase family. In terms of assembly, homodimer or homotrimer. Requires Mg(2+) as cofactor.

The catalysed reaction is (S)-malyl-CoA + H2O = (S)-malate + CoA + H(+). Functionally, catalyzes the hydrolysis of (3S)-malyl-CoA to (3S)-malate and free CoA. Inactive towards beta-methylmalyl-CoA and other CoA esters. This is (3S)-malyl-CoA thioesterase from Cereibacter sphaeroides (strain ATCC 17025 / ATH 2.4.3) (Rhodobacter sphaeroides).